Reading from the N-terminus, the 1115-residue chain is DNA-directed RNA polymerase subunit beta (1115 aa).

Residues H1084–E1115 form a disordered region. Positions E1088 to E1115 are enriched in acidic residues.

The protein belongs to the RNA polymerase beta chain family. In terms of assembly, the RNAP catalytic core consists of 2 alpha, 1 beta, 1 beta' and 1 omega subunit. When a sigma factor is associated with the core the holoenzyme is formed, which can initiate transcription.

The enzyme catalyses RNA(n) + a ribonucleoside 5'-triphosphate = RNA(n+1) + diphosphate. DNA-dependent RNA polymerase catalyzes the transcription of DNA into RNA using the four ribonucleoside triphosphates as substrates. The chain is DNA-directed RNA polymerase subunit beta from Desulfitobacterium hafniense (strain DSM 10664 / DCB-2).